A 125-amino-acid chain; its full sequence is S-adenosylmethionine decarboxylase proenzyme (125 aa).

The active-site Schiff-base intermediate with substrate; via pyruvic acid is S71. Residue S71 is modified to Pyruvic acid (Ser); by autocatalysis. H76 acts as the Proton acceptor; for processing activity in catalysis. Catalysis depends on C91, which acts as the Proton donor; for catalytic activity.

It belongs to the prokaryotic AdoMetDC family. Type 1 subfamily. As to quaternary structure, heterotetramer of two alpha and two beta chains arranged as a dimer of alpha/beta heterodimers. Pyruvate is required as a cofactor. Is synthesized initially as an inactive proenzyme. Formation of the active enzyme involves a self-maturation process in which the active site pyruvoyl group is generated from an internal serine residue via an autocatalytic post-translational modification. Two non-identical subunits are generated from the proenzyme in this reaction, and the pyruvate is formed at the N-terminus of the alpha chain, which is derived from the carboxyl end of the proenzyme. The post-translation cleavage follows an unusual pathway, termed non-hydrolytic serinolysis, in which the side chain hydroxyl group of the serine supplies its oxygen atom to form the C-terminus of the beta chain, while the remainder of the serine residue undergoes an oxidative deamination to produce ammonia and the pyruvoyl group blocking the N-terminus of the alpha chain.

The catalysed reaction is S-adenosyl-L-methionine + H(+) = S-adenosyl 3-(methylsulfanyl)propylamine + CO2. The protein operates within amine and polyamine biosynthesis; S-adenosylmethioninamine biosynthesis; S-adenosylmethioninamine from S-adenosyl-L-methionine: step 1/1. In terms of biological role, catalyzes the decarboxylation of S-adenosylmethionine to S-adenosylmethioninamine (dcAdoMet), the propylamine donor required for the synthesis of the polyamines spermine and spermidine from the diamine putrescine. This Pyrobaculum aerophilum (strain ATCC 51768 / DSM 7523 / JCM 9630 / CIP 104966 / NBRC 100827 / IM2) protein is S-adenosylmethionine decarboxylase proenzyme.